The following is a 213-amino-acid chain: Large ribosomal subunit protein uL1 (213 aa).

Belongs to the universal ribosomal protein uL1 family. In terms of assembly, part of the 50S ribosomal subunit.

Its function is as follows. Binds directly to 23S rRNA. Probably involved in E site tRNA release. Functionally, protein L1 is also a translational repressor protein, it controls the translation of its operon by binding to its mRNA. This Methanococcus voltae protein is Large ribosomal subunit protein uL1.